The primary structure comprises 328 residues: Pleckstrin homology domain protein OPY1 (328 aa).

The disordered stretch occupies residues 19-52 (NLIKKPSTSQNKTPTAQSSSGNNGAADGAPQGYH). Residues 24 to 41 (PSTSQNKTPTAQSSSGNN) are compositionally biased toward polar residues. The segment at 213 to 328 (AEHQVCSGIL…IRKKLKAENI (116 aa)) is required for targeting to the cell membrane. The PH domain maps to 215-318 (HQVCSGILYT…WIINFKSGIL (104 aa)).

In terms of assembly, interacts with MSS4 (via N-terminus); to negatively regulate MSS4 kinase activity.

It is found in the cell membrane. It localises to the cytoplasm. Its function is as follows. Binds phosphatidylinositol 4,5-bisphosphate (PtdIns(4,5)P2/PIP2) at the cell membrane. Negatively regulates the activity of phosphatidylinositol 4-phosphate 5-kinase MSS4. The polypeptide is Pleckstrin homology domain protein OPY1 (OPY1) (Saccharomyces cerevisiae (strain ATCC 204508 / S288c) (Baker's yeast)).